We begin with the raw amino-acid sequence, 499 residues long: Maturase K (499 aa).

Belongs to the intron maturase 2 family. MatK subfamily.

The protein localises to the plastid. It is found in the chloroplast. In terms of biological role, usually encoded in the trnK tRNA gene intron. Probably assists in splicing its own and other chloroplast group II introns. This Gleditsia triacanthos (Common honey-locust) protein is Maturase K.